The sequence spans 186 residues: Trafficking protein particle complex subunit 3 (186 aa).

It belongs to the TRAPP small subunits family. BET3 subfamily. In terms of assembly, homodimer. Part of the multisubunit TRAPP (transport protein particle) complex.

The protein resides in the golgi apparatus. It localises to the cis-Golgi network. Its subcellular location is the endoplasmic reticulum. In terms of biological role, may play a role in vesicular transport from endoplasmic reticulum to Golgi. The chain is Trafficking protein particle complex subunit 3 (trappc3) from Dictyostelium discoideum (Social amoeba).